The following is a 132-amino-acid chain: Small ribosomal subunit protein uS8 (132 aa).

The protein belongs to the universal ribosomal protein uS8 family. Part of the 30S ribosomal subunit. Contacts proteins S5 and S12.

Functionally, one of the primary rRNA binding proteins, it binds directly to 16S rRNA central domain where it helps coordinate assembly of the platform of the 30S subunit. This chain is Small ribosomal subunit protein uS8, found in Allorhizobium ampelinum (strain ATCC BAA-846 / DSM 112012 / S4) (Agrobacterium vitis (strain S4)).